The following is a 370-amino-acid chain: Alpha-(1,3)-fucosyltransferase 7 (370 aa).

Over 1 to 36 (MVQGCLCWRGCCDLKTSFPWVTNSRRLWMNCIGCNP) the chain is Cytoplasmic. Residues 37–59 (VWRLRAWGCLAGGTTLMVIWLFW) traverse the membrane as a helical; Signal-anchor for type II membrane protein segment. Residues 60 to 370 (LLRSVPGGAP…YEDLESWFQA (311 aa)) are Lumenal-facing. An N-linked (GlcNAc...) asparagine glycan is attached at asparagine 86. Cysteines 96 and 104 form a disulfide. Asparagine 109 carries an N-linked (GlcNAc...) asparagine glycan. A disulfide bond links cysteine 239 and cysteine 242. N-linked (GlcNAc...) asparagine glycosylation is present at asparagine 319. Cysteine 346 and cysteine 349 are disulfide-bonded.

The protein belongs to the glycosyltransferase 10 family. Post-translationally, N-glycosylated. Expressed in lymph node and kidney.

The protein localises to the golgi apparatus. The protein resides in the golgi stack membrane. It catalyses the reaction an N-acetyl-alpha-neuraminyl-(2-&gt;3)-beta-D-galactosyl-(1-&gt;4)-N-acetyl-beta-D-glucosaminyl derivative + GDP-beta-L-fucose = an alpha-Neu5Ac-(2-&gt;3)-beta-D-Gal-(1-&gt;4)-[alpha-L-Fuc-(1-&gt;3)]-beta-D-GlcNAc derivative + GDP + H(+). The catalysed reaction is a neolactoside IV(3)-alpha-NeuAc-nLc4Cer + GDP-beta-L-fucose = a neolactoside IV(3)-alpha-NeuNAc,III(3)-alpha-Fuc-nLc4Cer + GDP + H(+). It carries out the reaction a neolactoside VI(3)-alpha-NeuNAc-nLc6Cer + GDP-beta-L-fucose = a neolactoside VI(3)-alpha-NeuAc,V(3)-alphaFuc-nLc6Cer + GDP + H(+). The enzyme catalyses an alpha-Neu5Ac-(2-&gt;3)-beta-D-Gal-(1-&gt;4)-beta-D-GlcNAc-(1-&gt;3)-beta-D-Gal-(1-&gt;4)-[alpha-L-Fuc-(1-&gt;3)]-beta-D-GlcNAc derivative + GDP-beta-L-fucose = an alpha-Neu5Ac-(2-&gt;3)-beta-D-Gal-(1-&gt;4)-[alpha-L-Fuc-(1-&gt;3)]-beta-D-GlcNAc-(1-&gt;3)-beta-D-Gal-(1-&gt;4)-[alpha-L-Fuc-(1-&gt;3)]-beta-D-GlcNAc derivative + GDP + H(+). It catalyses the reaction an alpha-Neu5Ac-(2-&gt;3)-beta-D-Gal-(1-&gt;4)-beta-D-GlcNAc6S derivative + GDP-beta-L-fucose = an alpha-Neu5Ac-(2-&gt;3)-beta-D-Gal-(1-&gt;4)-[alpha-L-Fuc-(1-&gt;3)]-beta-D-GlcNAc6S derivative + GDP + H(+). The catalysed reaction is alpha-Neu5Ac-(2-&gt;3)-beta-D-Gal-(1-&gt;4)-beta-D-GlcNAc-(1-&gt;3)-beta-D-Gal-(1-&gt;4)-D-Glc + GDP-beta-L-fucose = alpha-Neu5Ac-(2-&gt;3)-beta-D-Gal-(1-&gt;4)-[alpha-L-Fuc-(1-&gt;3)]-beta-D-GlcNAc-(1-&gt;3)-beta-D-Gal-(1-&gt;4)-D-Glc + GDP + H(+). It carries out the reaction alpha-Neu5Ac-(2-&gt;3)-beta-D-Gal-(1-&gt;4)-beta-D-GlcNAc-(1-&gt;3)-beta-D-Gal-(1-&gt;4)-[alpha-L-Fuc-(1-&gt;3)]-beta-D-GlcNAc-(1-&gt;3)-beta-D-Gal-(1-&gt;4)-beta-D-GlcNAc + GDP-beta-L-fucose = alpha-Neu5Ac-(2-&gt;3)-beta-D-Gal-(1-&gt;4)-[alpha-L-Fuc-(1-&gt;3)]-beta-D-GlcNAc-(1-&gt;3)-beta-D-Gal-(1-&gt;4)-[alpha-L-Fuc-(1-&gt;3)]-beta-D-GlcNAc-(1-&gt;3)-beta-D-Gal-(1-&gt;4)-beta-D-GlcNAc + GDP + H(+). The enzyme catalyses alpha-Neu5Ac-(2-&gt;3)-beta-D-Gal-(1-&gt;4)-beta-D-GlcNAc-(1-&gt;3)-beta-D-Gal-(1-&gt;4)-beta-D-GlcNAc-(1-&gt;3)-beta-D-Gal-(1-&gt;4)-beta-D-GlcNAc + GDP-beta-L-fucose = alpha-Neu5Ac-(2-&gt;3)-beta-D-Gal-(1-&gt;4)-[alpha-L-Fuc-(1-&gt;3)]-beta-D-GlcNAc-(1-&gt;3)-beta-D-Gal-(1-&gt;4)-beta-D-GlcNAc-(1-&gt;3)-beta-D-Gal-(1-&gt;4)-beta-D-GlcNAc + GDP + H(+). It functions in the pathway protein modification; protein glycosylation. Inhibited by NaCl. Inhibited by GDP in a concentration dependent manner, with an IC(50) value of 93 uM. Also inhibited by GMP and GTP. Inhibited by N-ethylmaleimide. Activated by poly(ethylene glycol) by enhancing the thermal stability of FUT7. Activated by Mn2+, Ca2+, and Mg2+. Both panosialin A and B inhibit activity with IC(50) values of 4.8 and 5.3 ug/ml, respectively. Inhibited by gallic acid (GA) and (-)-epigallocatechin gallate (EGCG) in a time-dependent and irreversible manner with IC(50) values of 60 and 700 nM, respectively. In terms of biological role, catalyzes the transfer of L-fucose, from a guanosine diphosphate-beta-L-fucose, to the N-acetyl glucosamine (GlcNAc) of a distal alpha2,3 sialylated lactosamine unit of a glycoprotein or a glycolipid-linked sialopolylactosamines chain through an alpha-1,3 glycosidic linkage and participates in the final fucosylation step in the biosynthesis of the sialyl Lewis X (sLe(x)), a carbohydrate involved in cell and matrix adhesion during leukocyte trafficking and fertilization. In vitro, also synthesizes sialyl-dimeric-Lex structures, from VIM-2 structures and both di-fucosylated and trifucosylated structures from mono-fucosylated precursors. However does not catalyze alpha 1-3 fucosylation when an internal alpha 1-3 fucosylation is present in polylactosamine chain and the fucosylation rate of the internal GlcNAc residues is reduced once fucose has been added to the distal GlcNAc. Also catalyzes the transfer of a fucose from GDP-beta-fucose to the 6-sulfated a(2,3)sialylated substrate to produce 6-sulfo sLex mediating significant L-selectin-dependent cell adhesion. Through sialyl-Lewis(x) biosynthesis, can control SELE- and SELP-mediated cell adhesion with leukocytes and allows leukocytes tethering and rolling along the endothelial tissue thereby enabling the leukocytes to accumulate at a site of inflammation. May enhance embryo implantation through sialyl Lewis X (sLeX)-mediated adhesion of embryo cells to endometrium. May affect insulin signaling by up-regulating the phosphorylation and expression of some signaling molecules involved in the insulin-signaling pathway through SLe(x) which is present on the glycans of the INSRR alpha subunit. The polypeptide is Alpha-(1,3)-fucosyltransferase 7 (Rattus norvegicus (Rat)).